Here is an 877-residue protein sequence, read N- to C-terminus: MTKFTTEEVRSKFITYFKANNHTHVPASSLIPDNDPSLMFVNSGMVQFKNVFTGQEKRSYNKAVTSQKSLRAGGKHNDLEHVGYTARHHTFFEMLGNFSFGDYFKEQAIYYTWDLLTKEFELPKDKLYVTIYHTDDTAASYWEKISGLRDDRIIKIKTNDNFWSMGDTGPCGPCSEIFYDHGEEIYGGLPGTKDEDCDRFIEIWNMVFMQYEQINKETRIELPKKSIDTGMGLERMTAVLQHVNNNYDIDLFQEIINFTENIVKVKVDGEAKFSYRVIADHLRASSFLIADGIIPSNEGRGYVLRRIMRRAMRHAHMLGAKEPLMYKLLPKLVDLMGNIYPELKIAEGFISSILEQEEIRFKTTLERGLKLLTEETKTLTKGNKLSGEVAFKLYDTYGFPLDLTEDILKNRDIAVDHKGFEELMLIQKERARTSWLGSGESKTDQLWFDIKEQYGSTEFLGYTLNEAKCKIIALIKNNNLADTIQEVDTQFLLIANQTPFYGESGGQMGDIGMIFSQDSEVEVIDTLKYLRSIIVHKCILKKGKINIGENANFNIDIKYRKNLRIHHSATHILHAVLHKILGKQVIQKGSLVTSTYLRFDINHSKAITNEEITLIEDKVNEIIRNNHEVNTTVMFTEDAIKQGAIALFGEKYDSEVRVVKIGETSLELCCGTHVKRTGDIGAFKIISESSIAAGVRRIEAVCGEFVIKLIREKDNLIKLIESSVKTNKNELITKVTNILERNKELEKELEKAHLAGLDLSIEQIKKQAEQIAGIKLLYKKVGNINNKILRQAAENLTQKLENLIVVYIAHGVGKLSITVAVSKAITDKFNAGIIAKELSLFLGGSGGGGKASIAQSGGNDIVNLTNINKKLLSLIVT.

Zn(2+) contacts are provided by His-567, His-571, Cys-669, and His-673.

Belongs to the class-II aminoacyl-tRNA synthetase family. The cofactor is Zn(2+).

Its subcellular location is the cytoplasm. It carries out the reaction tRNA(Ala) + L-alanine + ATP = L-alanyl-tRNA(Ala) + AMP + diphosphate. Its function is as follows. Catalyzes the attachment of alanine to tRNA(Ala) in a two-step reaction: alanine is first activated by ATP to form Ala-AMP and then transferred to the acceptor end of tRNA(Ala). Also edits incorrectly charged Ser-tRNA(Ala) and Gly-tRNA(Ala) via its editing domain. This is Alanine--tRNA ligase from Rickettsia typhi (strain ATCC VR-144 / Wilmington).